The chain runs to 293 residues: Phosphatidylserine decarboxylase proenzyme (293 aa).

Active-site charge relay system; for autoendoproteolytic cleavage activity residues include Asp-88, His-144, and Ser-247. Ser-247 serves as the catalytic Schiff-base intermediate with substrate; via pyruvic acid; for decarboxylase activity. Ser-247 carries the post-translational modification Pyruvic acid (Ser); by autocatalysis.

Belongs to the phosphatidylserine decarboxylase family. PSD-B subfamily. Prokaryotic type I sub-subfamily. As to quaternary structure, heterodimer of a large membrane-associated beta subunit and a small pyruvoyl-containing alpha subunit. Pyruvate serves as cofactor. Is synthesized initially as an inactive proenzyme. Formation of the active enzyme involves a self-maturation process in which the active site pyruvoyl group is generated from an internal serine residue via an autocatalytic post-translational modification. Two non-identical subunits are generated from the proenzyme in this reaction, and the pyruvate is formed at the N-terminus of the alpha chain, which is derived from the carboxyl end of the proenzyme. The autoendoproteolytic cleavage occurs by a canonical serine protease mechanism, in which the side chain hydroxyl group of the serine supplies its oxygen atom to form the C-terminus of the beta chain, while the remainder of the serine residue undergoes an oxidative deamination to produce ammonia and the pyruvoyl prosthetic group on the alpha chain. During this reaction, the Ser that is part of the protease active site of the proenzyme becomes the pyruvoyl prosthetic group, which constitutes an essential element of the active site of the mature decarboxylase.

It localises to the cell membrane. The catalysed reaction is a 1,2-diacyl-sn-glycero-3-phospho-L-serine + H(+) = a 1,2-diacyl-sn-glycero-3-phosphoethanolamine + CO2. It functions in the pathway phospholipid metabolism; phosphatidylethanolamine biosynthesis; phosphatidylethanolamine from CDP-diacylglycerol: step 2/2. Functionally, catalyzes the formation of phosphatidylethanolamine (PtdEtn) from phosphatidylserine (PtdSer). In Xylella fastidiosa (strain 9a5c), this protein is Phosphatidylserine decarboxylase proenzyme.